A 311-amino-acid polypeptide reads, in one-letter code: Ribosomal RNA small subunit methyltransferase H (311 aa).

Residues 33–35 (AGH), D53, F80, D101, and Q108 each bind S-adenosyl-L-methionine.

It belongs to the methyltransferase superfamily. RsmH family.

Its subcellular location is the cytoplasm. It carries out the reaction cytidine(1402) in 16S rRNA + S-adenosyl-L-methionine = N(4)-methylcytidine(1402) in 16S rRNA + S-adenosyl-L-homocysteine + H(+). Functionally, specifically methylates the N4 position of cytidine in position 1402 (C1402) of 16S rRNA. The chain is Ribosomal RNA small subunit methyltransferase H from Geobacter sulfurreducens (strain ATCC 51573 / DSM 12127 / PCA).